We begin with the raw amino-acid sequence, 269 residues long: Tryptophan synthase alpha chain (269 aa).

Catalysis depends on proton acceptor residues Glu-49 and Asp-60.

Belongs to the TrpA family. Tetramer of two alpha and two beta chains.

It catalyses the reaction (1S,2R)-1-C-(indol-3-yl)glycerol 3-phosphate + L-serine = D-glyceraldehyde 3-phosphate + L-tryptophan + H2O. It participates in amino-acid biosynthesis; L-tryptophan biosynthesis; L-tryptophan from chorismate: step 5/5. In terms of biological role, the alpha subunit is responsible for the aldol cleavage of indoleglycerol phosphate to indole and glyceraldehyde 3-phosphate. The protein is Tryptophan synthase alpha chain of Pseudomonas putida (strain ATCC 47054 / DSM 6125 / CFBP 8728 / NCIMB 11950 / KT2440).